A 1405-amino-acid polypeptide reads, in one-letter code: DNA-directed RNA polymerase subunit beta' (1405 aa).

The Zn(2+) site is built by Cys-71, Cys-73, Cys-86, and Cys-89. 3 residues coordinate Mg(2+): Asp-462, Asp-464, and Asp-466. Residues Cys-810, Cys-884, Cys-891, and Cys-894 each coordinate Zn(2+).

Belongs to the RNA polymerase beta' chain family. The RNAP catalytic core consists of 2 alpha, 1 beta, 1 beta' and 1 omega subunit. When a sigma factor is associated with the core the holoenzyme is formed, which can initiate transcription. The cofactor is Mg(2+). Zn(2+) serves as cofactor.

It carries out the reaction RNA(n) + a ribonucleoside 5'-triphosphate = RNA(n+1) + diphosphate. In terms of biological role, DNA-dependent RNA polymerase catalyzes the transcription of DNA into RNA using the four ribonucleoside triphosphates as substrates. The sequence is that of DNA-directed RNA polymerase subunit beta' from Maricaulis maris (strain MCS10) (Caulobacter maris).